Reading from the N-terminus, the 437-residue chain is 3-ketoacyl-CoA thiolase (437 aa).

Cys99 acts as the Acyl-thioester intermediate in catalysis. Active-site proton acceptor residues include His392 and Cys422.

Belongs to the thiolase-like superfamily. Thiolase family. In terms of assembly, heterotetramer of two alpha chains (FadJ) and two beta chains (FadI).

Its subcellular location is the cytoplasm. It carries out the reaction an acyl-CoA + acetyl-CoA = a 3-oxoacyl-CoA + CoA. Its pathway is lipid metabolism; fatty acid beta-oxidation. Catalyzes the final step of fatty acid oxidation in which acetyl-CoA is released and the CoA ester of a fatty acid two carbons shorter is formed. The polypeptide is 3-ketoacyl-CoA thiolase (Erwinia tasmaniensis (strain DSM 17950 / CFBP 7177 / CIP 109463 / NCPPB 4357 / Et1/99)).